Reading from the N-terminus, the 109-residue chain is METRASLRGVRLSAQKGRLVADLVRGKPVGQALNILAFCPKKGAGIVKKVLESAIANAEHNDGADIDELTVKTIYVEKGMVLKRFTARAKGRGNRIIKPTCHIYLTVGN.

It belongs to the universal ribosomal protein uL22 family. In terms of assembly, part of the 50S ribosomal subunit.

Functionally, this protein binds specifically to 23S rRNA; its binding is stimulated by other ribosomal proteins, e.g. L4, L17, and L20. It is important during the early stages of 50S assembly. It makes multiple contacts with different domains of the 23S rRNA in the assembled 50S subunit and ribosome. The globular domain of the protein is located near the polypeptide exit tunnel on the outside of the subunit, while an extended beta-hairpin is found that lines the wall of the exit tunnel in the center of the 70S ribosome. The sequence is that of Large ribosomal subunit protein uL22 from Dechloromonas aromatica (strain RCB).